We begin with the raw amino-acid sequence, 159 residues long: Large ribosomal subunit protein uL11 (159 aa).

This sequence belongs to the universal ribosomal protein uL11 family. Part of the ribosomal stalk of the 50S ribosomal subunit. Interacts with L10 and the large rRNA to form the base of the stalk. L10 forms an elongated spine to which L12 dimers bind in a sequential fashion forming a multimeric L10(L12)X complex.

Functionally, forms part of the ribosomal stalk which helps the ribosome interact with GTP-bound translation factors. The polypeptide is Large ribosomal subunit protein uL11 (Methanococcus maripaludis (strain C6 / ATCC BAA-1332)).